The following is a 261-amino-acid chain: Cytochrome c oxidase subunit 3 (261 aa).

The Mitochondrial matrix segment spans residues 1–15 (MAHQAHSYHMVDPSP). Residues 16 to 34 (WPIFGAAAALLTTSGLIMW) traverse the membrane as a helical segment. Residues 35-40 (FHYSST) lie on the Mitochondrial intermembrane side of the membrane. The helical transmembrane segment at 41-66 (TLLTMGLLSMLLVMLQWWRDVVREST) threads the bilayer. The Mitochondrial matrix portion of the chain corresponds to 67 to 72 (FQGHHT). A helical transmembrane segment spans residues 73–105 (PTVQKGLRYGMILFITSEAFFFLGFFWAFFHSS). Topologically, residues 106–128 (LAPTPELGGQWPPTGVKPLNPLE) are mitochondrial intermembrane. A helical membrane pass occupies residues 129-152 (VPLLNTAILLASGVTVTWAHHSIT). The Mitochondrial matrix segment spans residues 153–155 (EGN). A helical transmembrane segment spans residues 156 to 183 (RKQAIHALTLTILLGFYFTALQAMEYHE). Residues 184-190 (ASFSIAD) are Mitochondrial intermembrane-facing. A helical membrane pass occupies residues 191 to 223 (SVYGSTFFVATGFHGLHVIIGSSFLTVCLLRLI). The Mitochondrial matrix portion of the chain corresponds to 224–232 (KFHFTPNHH). The helical transmembrane segment at 233–256 (FGFEAAAWYWHFVDIIWLFLYMSM) threads the bilayer. The Mitochondrial intermembrane segment spans residues 257–261 (YWWGS).

The protein belongs to the cytochrome c oxidase subunit 3 family. In terms of assembly, component of the cytochrome c oxidase (complex IV, CIV), a multisubunit enzyme composed of 14 subunits. The complex is composed of a catalytic core of 3 subunits MT-CO1, MT-CO2 and MT-CO3, encoded in the mitochondrial DNA, and 11 supernumerary subunits COX4I, COX5A, COX5B, COX6A, COX6B, COX6C, COX7A, COX7B, COX7C, COX8 and NDUFA4, which are encoded in the nuclear genome. The complex exists as a monomer or a dimer and forms supercomplexes (SCs) in the inner mitochondrial membrane with NADH-ubiquinone oxidoreductase (complex I, CI) and ubiquinol-cytochrome c oxidoreductase (cytochrome b-c1 complex, complex III, CIII), resulting in different assemblies (supercomplex SCI(1)III(2)IV(1) and megacomplex MCI(2)III(2)IV(2)).

It is found in the mitochondrion inner membrane. The catalysed reaction is 4 Fe(II)-[cytochrome c] + O2 + 8 H(+)(in) = 4 Fe(III)-[cytochrome c] + 2 H2O + 4 H(+)(out). In terms of biological role, component of the cytochrome c oxidase, the last enzyme in the mitochondrial electron transport chain which drives oxidative phosphorylation. The respiratory chain contains 3 multisubunit complexes succinate dehydrogenase (complex II, CII), ubiquinol-cytochrome c oxidoreductase (cytochrome b-c1 complex, complex III, CIII) and cytochrome c oxidase (complex IV, CIV), that cooperate to transfer electrons derived from NADH and succinate to molecular oxygen, creating an electrochemical gradient over the inner membrane that drives transmembrane transport and the ATP synthase. Cytochrome c oxidase is the component of the respiratory chain that catalyzes the reduction of oxygen to water. Electrons originating from reduced cytochrome c in the intermembrane space (IMS) are transferred via the dinuclear copper A center (CU(A)) of subunit 2 and heme A of subunit 1 to the active site in subunit 1, a binuclear center (BNC) formed by heme A3 and copper B (CU(B)). The BNC reduces molecular oxygen to 2 water molecules using 4 electrons from cytochrome c in the IMS and 4 protons from the mitochondrial matrix. This Gallus gallus (Chicken) protein is Cytochrome c oxidase subunit 3 (MT-CO3).